The primary structure comprises 707 residues: Toxin RTX-I translocation ATP-binding protein (707 aa).

One can recognise a Peptidase C39 domain in the interval 1–125 (MDFYREEDYG…SLYQGKLILV (125 aa)). H83 is a catalytic residue. In terms of domain architecture, ABC transmembrane type-1 spans 154–436 (FIETLIVSIF…LAQLWQDFQQ (283 aa)). The next 5 membrane-spanning stretches (helical) occupy residues 158–178 (LIVSIFLQIFALITPLFFQVV), 188–208 (FSTLNVITVALAIVVLFEIVL), 295–315 (LVILGSLPFYMGWSIFISPIL), 387–407 (VVMVITLWLGAHLVISGDLSI), and 410–430 (LIAFNMLSGQVIAPVIRLAQL). One can recognise an ABC transporter domain in the interval 468–703 (ITFRNIRFRY…PNGLYHYLHQ (236 aa)). 502–509 (GRSGSGKS) is a binding site for ATP.

Belongs to the ABC transporter superfamily. Protein-1 exporter (TC 3.A.1.109) family. As to quaternary structure, homodimer.

The protein localises to the cell membrane. Functionally, involved in the transport of the toxin RTX-I as well as that of RTX-II. In Actinobacillus pleuropneumoniae (Haemophilus pleuropneumoniae), this protein is Toxin RTX-I translocation ATP-binding protein (apxIB).